A 428-amino-acid chain; its full sequence is Enolase (428 aa).

Q163 is a binding site for (2R)-2-phosphoglycerate. Residue E205 is the Proton donor of the active site. Mg(2+) is bound by residues D242, E285, and D312. The (2R)-2-phosphoglycerate site is built by K337, R366, S367, and K388. Residue K337 is the Proton acceptor of the active site.

The protein belongs to the enolase family. Mg(2+) serves as cofactor.

The protein resides in the cytoplasm. It localises to the secreted. It is found in the cell surface. It catalyses the reaction (2R)-2-phosphoglycerate = phosphoenolpyruvate + H2O. It participates in carbohydrate degradation; glycolysis; pyruvate from D-glyceraldehyde 3-phosphate: step 4/5. Functionally, catalyzes the reversible conversion of 2-phosphoglycerate (2-PG) into phosphoenolpyruvate (PEP). It is essential for the degradation of carbohydrates via glycolysis. The chain is Enolase from Persephonella marina (strain DSM 14350 / EX-H1).